A 67-amino-acid chain; its full sequence is Protein AaeX (67 aa).

2 consecutive transmembrane segments (helical) span residues 10–30 and 43–63; these read FGLSFPPVFFVLMVSLTLFFV and FVWHPALFNSALFCCLFYLLF.

It belongs to the AaeX family.

Its subcellular location is the cell membrane. In Pectobacterium atrosepticum (strain SCRI 1043 / ATCC BAA-672) (Erwinia carotovora subsp. atroseptica), this protein is Protein AaeX.